Here is a 317-residue protein sequence, read N- to C-terminus: Fe-S cluster assembly protein DRE2 (317 aa).

Residues 1 to 131 (MERMLFLSPP…KPNFGAQDTV (131 aa)) are N-terminal SAM-like domain. Residues 132 to 209 (PLKLGKKKKA…EEALMDEEDM (78 aa)) form a linker region. Residues Cys-219, Cys-230, Cys-233, and Cys-235 each contribute to the [2Fe-2S] cluster site. The segment at 219 to 235 (CRPKAGKRRRACKDCTC) is fe-S binding site A. Residues Cys-280, Cys-283, Cys-291, and Cys-294 each contribute to the [4Fe-4S] cluster site. Short sequence motifs (cx2C motif) lie at residues 280–283 (CGNC) and 291–294 (CDGC). A fe-S binding site B region spans residues 280-294 (CGNCALGDAFRCDGC).

Belongs to the anamorsin family. In terms of assembly, monomer. Interacts with TAH18. Interacts with MIA40. [2Fe-2S] cluster serves as cofactor. Requires [4Fe-4S] cluster as cofactor.

The protein localises to the cytoplasm. Its subcellular location is the mitochondrion intermembrane space. Its function is as follows. Component of the cytosolic iron-sulfur (Fe-S) protein assembly (CIA) machinery required for the maturation of extramitochondrial Fe-S proteins. Part of an electron transfer chain functioning in an early step of cytosolic Fe-S biogenesis, facilitating the de novo assembly of a [4Fe-4S] cluster on the scaffold complex CFD1-NBP35. Electrons are transferred to DRE2 from NADPH via the FAD- and FMN-containing protein TAH18. TAH18-DRE2 are also required for the assembly of the diferric tyrosyl radical cofactor of ribonucleotide reductase (RNR), probably by providing electrons for reduction during radical cofactor maturation in the catalytic small subunit RNR2. The sequence is that of Fe-S cluster assembly protein DRE2 from Uncinocarpus reesii (strain UAMH 1704).